We begin with the raw amino-acid sequence, 214 residues long: LVLVNYLLFKGKWKVPFNPNDTFESEFYLDEKRSVKVPMMKIKEVTTPYVRDEELSCSVLELKYTGNASALFILPDQGKMQQVESSLQPETLKKWKDSLIPSIINDLRMPKFSISTDYSLEKEVLPELGIKKVFSQQADLSRITGTKDLYVSQVVHKAVLDVAETGTEATAATGVATVIRRQPRTLNFNQPFMVFITDMDSQSILFVAKITNPS.

The protein belongs to the serpin family.

This is Serine protease inhibitor 2.1 from Rattus norvegicus (Rat).